The chain runs to 223 residues: Uracil-DNA glycosylase (223 aa).

Catalysis depends on D64, which acts as the Proton acceptor.

The protein belongs to the uracil-DNA glycosylase (UDG) superfamily. UNG family.

Its subcellular location is the cytoplasm. It carries out the reaction Hydrolyzes single-stranded DNA or mismatched double-stranded DNA and polynucleotides, releasing free uracil.. Excises uracil residues from the DNA which can arise as a result of misincorporation of dUMP residues by DNA polymerase or due to deamination of cytosine. The polypeptide is Uracil-DNA glycosylase (Desulfitobacterium hafniense (strain DSM 10664 / DCB-2)).